A 104-amino-acid polypeptide reads, in one-letter code: L-rhamnose mutarotase (104 aa).

Tyr-18 serves as a coordination point for substrate. His-22 (proton donor) is an active-site residue. Substrate is bound by residues Tyr-41 and 76–77 (WW).

The protein belongs to the rhamnose mutarotase family. Homodimer.

Its subcellular location is the cytoplasm. The catalysed reaction is alpha-L-rhamnose = beta-L-rhamnose. Its pathway is carbohydrate metabolism; L-rhamnose metabolism. In terms of biological role, involved in the anomeric conversion of L-rhamnose. The sequence is that of L-rhamnose mutarotase from Clostridium beijerinckii (strain ATCC 51743 / NCIMB 8052) (Clostridium acetobutylicum).